The sequence spans 157 residues: Ribosome-binding factor A (157 aa).

A disordered region spans residues 126–157 (RARATAQYAGDADPYKHDDEPSDDFEDDSDEE). Positions 145–157 (EPSDDFEDDSDEE) are enriched in acidic residues.

It belongs to the RbfA family. As to quaternary structure, monomer. Binds 30S ribosomal subunits, but not 50S ribosomal subunits or 70S ribosomes.

It localises to the cytoplasm. In terms of biological role, one of several proteins that assist in the late maturation steps of the functional core of the 30S ribosomal subunit. Associates with free 30S ribosomal subunits (but not with 30S subunits that are part of 70S ribosomes or polysomes). Required for efficient processing of 16S rRNA. May interact with the 5'-terminal helix region of 16S rRNA. The sequence is that of Ribosome-binding factor A from Bifidobacterium longum (strain DJO10A).